The following is a 414-amino-acid chain: Collagenase (414 aa).

The protein belongs to the peptidase U32 family. Homodimer. A metal cation serves as cofactor.

Has collagenase activity. Hydrolyzes type I collagen. May play a role in virulence. The protein is Collagenase (prtC) of Porphyromonas gingivalis (strain ATCC BAA-308 / W83).